Here is a 390-residue protein sequence, read N- to C-terminus: 3-ketoacyl-CoA thiolase (390 aa).

The active-site Acyl-thioester intermediate is the Cys-95. Catalysis depends on proton acceptor residues His-346 and Cys-376.

This sequence belongs to the thiolase-like superfamily. Thiolase family. In terms of assembly, heterotetramer of two alpha chains (FadB) and two beta chains (FadA).

The protein localises to the cytoplasm. It carries out the reaction an acyl-CoA + acetyl-CoA = a 3-oxoacyl-CoA + CoA. It participates in lipid metabolism; fatty acid beta-oxidation. In terms of biological role, catalyzes the final step of fatty acid oxidation in which acetyl-CoA is released and the CoA ester of a fatty acid two carbons shorter is formed. The sequence is that of 3-ketoacyl-CoA thiolase from Acinetobacter baylyi (strain ATCC 33305 / BD413 / ADP1).